Reading from the N-terminus, the 309-residue chain is Homoserine O-succinyltransferase (309 aa).

The Acyl-thioester intermediate role is filled by Cys-142. 2 residues coordinate substrate: Lys-163 and Ser-192. Catalysis depends on His-235, which acts as the Proton acceptor. Glu-237 is a catalytic residue. Arg-249 lines the substrate pocket.

It belongs to the MetA family. Homodimer.

The protein resides in the cytoplasm. It catalyses the reaction L-homoserine + succinyl-CoA = O-succinyl-L-homoserine + CoA. It participates in amino-acid biosynthesis; L-methionine biosynthesis via de novo pathway; O-succinyl-L-homoserine from L-homoserine: step 1/1. Its function is as follows. Transfers a succinyl group from succinyl-CoA to L-homoserine, forming succinyl-L-homoserine. The chain is Homoserine O-succinyltransferase from Shigella sonnei (strain Ss046).